The following is a 20-amino-acid chain: Unknown protein NF019 from 2D-PAGE (20 aa).

In Naegleria fowleri (Brain eating amoeba), this protein is Unknown protein NF019 from 2D-PAGE.